Consider the following 193-residue polypeptide: Bcl-2-binding component 3 (193 aa).

Disordered regions lie at residues 1–32 and 71–131; these read MARA…RLMP and ALGG…VEEE. The residue at position 10 (S10) is a Phosphoserine. Residues 137-151 carry the BH3 motif; the sequence is IGAQLRRMADDLNAQ.

This sequence belongs to the Bcl-2 family. Interacts with MCL1 and BCL2A1. Interacts (via BH3 domain) with BCL2 and BCL2L1/BCL-XL. Interacts (via BH3 domain) with NOL3/ARC (via CARD domain); this interaction prevents BBC3 association with BCL2 and results in CASP8 activation.

It localises to the mitochondrion. Essential mediator of p53/TP53-dependent and p53/TP53-independent apoptosis. Promotes partial unfolding of BCL2L1 and dissociation of BCL2L1 from p53/TP53, releasing the bound p53/TP53 to induce apoptosis. Regulates ER stress-induced neuronal apoptosis. In Rattus norvegicus (Rat), this protein is Bcl-2-binding component 3 (Bbc3).